A 124-amino-acid polypeptide reads, in one-letter code: Large ribosomal subunit protein bL19 (124 aa).

This sequence belongs to the bacterial ribosomal protein bL19 family.

This protein is located at the 30S-50S ribosomal subunit interface and may play a role in the structure and function of the aminoacyl-tRNA binding site. The protein is Large ribosomal subunit protein bL19 of Dinoroseobacter shibae (strain DSM 16493 / NCIMB 14021 / DFL 12).